A 143-amino-acid polypeptide reads, in one-letter code: Putative RNA polymerase II subunit B1 CTD phosphatase RPAP2 homolog (143 aa).

An RTR1-type zinc finger spans residues S46 to D129. Zn(2+)-binding residues include C69, C74, C105, and C109.

The protein belongs to the RPAP2 family.

The protein resides in the nucleus. It catalyses the reaction O-phospho-L-seryl-[protein] + H2O = L-seryl-[protein] + phosphate. The enzyme catalyses O-phospho-L-threonyl-[protein] + H2O = L-threonyl-[protein] + phosphate. Its function is as follows. Putative RNA polymerase II subunit B1 C-terminal domain (CTD) phosphatase involved in RNA polymerase II transcription regulation. The protein is Putative RNA polymerase II subunit B1 CTD phosphatase RPAP2 homolog of Drosophila melanogaster (Fruit fly).